A 619-amino-acid polypeptide reads, in one-letter code: TOX high mobility group box family member 4 (619 aa).

Disordered stretches follow at residues 155 to 227 (LSLG…QKPV) and 306 to 335 (DPVP…TESP). Threonine 176 bears the Phosphothreonine mark. A phosphoserine mark is found at serine 178 and serine 182. Residues 183–193 (LHEDGVDDFRR) are compositionally biased toward basic and acidic residues. Over residues 208–218 (KQKAPKKRKKK) the composition is skewed to basic residues. Positions 213 to 218 (KKRKKK) match the Nuclear localization signal motif. The HMG box DNA-binding region spans 223–291 (PQKPVSAYAL…EYLKALAAYK (69 aa)). Threonine 313 carries the phosphothreonine modification. Residue serine 315 is modified to Phosphoserine. The segment covering 320–335 (TAADPASPAPASTESP) has biased composition (low complexity). At arginine 479 the chain carries Asymmetric dimethylarginine. 6 positions are modified to phosphoserine: serine 531, serine 548, serine 550, serine 558, serine 560, and serine 565.

As to quaternary structure, component of the PNUTS-PP1 phosphatase complex, composed of PPP1R10/PNUTS, TOX4, WDR82 and PPP1CA or PPP1CB or PPP1CC. Interacts with PPP1R10/PNUTS. Interacts with FOXO1 and CREB1 (increased by cAMP); FOXO1 and CREB1 are required for full induction of TOX4-dependent activity and the interactions are inhibited by insulin.

It localises to the nucleus. It is found in the chromosome. With respect to regulation, in liver, recruited to target gene promoters following treatment with dexamethasone and cAMP. Binding is decreased in presence of insulin. Transcription factor that modulates cell fate reprogramming from the somatic state to the pluripotent and neuronal fate. In liver, controls the expression of hormone-regulated gluconeogenic genes such as G6PC1 and PCK1. This regulation is independent of the insulin receptor activation. Also acts as a regulatory component of protein phosphatase 1 (PP1) complexes. Component of the PNUTS-PP1 protein phosphatase complex, a PP1 complex that regulates RNA polymerase II transcription pause-release. PNUTS-PP1 also plays a role in the control of chromatin structure and cell cycle progression during the transition from mitosis into interphase. In Mus musculus (Mouse), this protein is TOX high mobility group box family member 4.